A 1058-amino-acid polypeptide reads, in one-letter code: MPKRTDIQKIMVIGSGPIIIGQAAEFDYAGTQACLSLKEEGYEVVLVNSNPATIMTDKEIADKVYIEPITLEFVTRILRKERPDALLPTLGGQTGLNMAMELSKNGILDELGVEFLGTRLSAIDQAEDRDLFKQLMEELEQPIPESEIVNTVEEAIAFAATIGYPVIVRPAFTLGGTGGGMCANEKELREITENGLKLSPVTQCLIERSIAGFKEIEYEVMRDSADNALVVCNMENFDPVGIHTGDSIVFAPAQTMSDYENQMLRDASLSIIRALKIEGGCNVQLALDPNSFKYYVIEVNPRVSRSSALASKATGYPIAKLAAKIAVGLTLDEVINPVTGSTYAMFEPALDYVVAKIPRFPFDKFEKGERRLGTQMKATGEVMAIGRNIEESLLKACRSLEIGVHHNEIPELAAVSDDALIEKVVKAQDDRLFYVSEAIRRGYTPEEIAELTKIDIFYLDKLLHIFEIEQELGAHPQDLEVLKTAKLNGFSDRKIAELWGTTDDQVRQLRLENKIVPVYKMVDTCAAEFDSETPYFYSTYGWENESIRSDKESVLVLGSGPIRIGQGVEFDYATVHSVKAIQAAGYEAIIMNSNPETVSTDFSVSDKLYFEPLTFEDVMNVIDLEQPKGVIVQFGGQTAINLAEPLAKAGVTILGTQVADLDRAEDRDLFEQALKELDIPQPPGQTATNEEEAALAARKIGFPVLVRPSYVLGGRAMEIVENEEDLRSYMRTAVKASPDHPVLVDSYIVGQECEVDAISDGKNVLIPGIMEHIERAGVHSGDSMAVYPPQTLSQKVQETIADYTKRLAIGLHCLGMMNIQFVIKDEKVYVIEVNPRASRTVPFLSKVTNIPMAQVATKLILGQSLSELGYQNGLYPESTRVHIKAPVFSFTKLAKVDSLLGPEMKSTGEVMGSDATLEKALYKAFEASYLHLPTFGNVVFTIADDAKEEALNLARRFQNIGYGILATEGTAAFFASHGLQAQPVGKIGDDDKDIPSFVRKGRIQAIINTVGTKRTADEDGEQIRRSAIEHGVPLFTALDTANAMLKVLESRSFVTEAI.

The segment at 1 to 401 (MPKRTDIQKI…SLLKACRSLE (401 aa)) is carboxyphosphate synthetic domain. Arginine 129, arginine 169, glycine 175, glycine 176, arginine 208, isoleucine 210, glutamate 215, glycine 241, isoleucine 242, histidine 243, glutamine 284, and glutamate 298 together coordinate ATP. In terms of domain architecture, ATP-grasp 1 spans 133–327 (KQLMEELEQP…IAKLAAKIAV (195 aa)). The Mg(2+) site is built by glutamine 284, glutamate 298, and asparagine 300. Positions 284, 298, and 300 each coordinate Mn(2+). The tract at residues 402–546 (IGVHHNEIPE…YSTYGWENES (145 aa)) is oligomerization domain. Residues 547–929 (IRSDKESVLV…ALYKAFEASY (383 aa)) are carbamoyl phosphate synthetic domain. The region spanning 671 to 861 (EQALKELDIP…MAQVATKLIL (191 aa)) is the ATP-grasp 2 domain. ATP is bound by residues arginine 707, serine 746, isoleucine 748, glutamate 752, glycine 777, valine 778, histidine 779, serine 780, glutamine 820, and glutamate 832. Mg(2+)-binding residues include glutamine 820, glutamate 832, and asparagine 834. Mn(2+) is bound by residues glutamine 820, glutamate 832, and asparagine 834. The MGS-like domain maps to 930 to 1058 (LHLPTFGNVV…ESRSFVTEAI (129 aa)). An allosteric domain region spans residues 930–1058 (LHLPTFGNVV…ESRSFVTEAI (129 aa)).

It belongs to the CarB family. In terms of assembly, composed of two chains; the small (or glutamine) chain promotes the hydrolysis of glutamine to ammonia, which is used by the large (or ammonia) chain to synthesize carbamoyl phosphate. Tetramer of heterodimers (alpha,beta)4. Requires Mg(2+) as cofactor. It depends on Mn(2+) as a cofactor.

The catalysed reaction is hydrogencarbonate + L-glutamine + 2 ATP + H2O = carbamoyl phosphate + L-glutamate + 2 ADP + phosphate + 2 H(+). It catalyses the reaction hydrogencarbonate + NH4(+) + 2 ATP = carbamoyl phosphate + 2 ADP + phosphate + 2 H(+). It functions in the pathway amino-acid biosynthesis; L-arginine biosynthesis; carbamoyl phosphate from bicarbonate: step 1/1. Its pathway is pyrimidine metabolism; UMP biosynthesis via de novo pathway; (S)-dihydroorotate from bicarbonate: step 1/3. Functionally, large subunit of the glutamine-dependent carbamoyl phosphate synthetase (CPSase). CPSase catalyzes the formation of carbamoyl phosphate from the ammonia moiety of glutamine, carbonate, and phosphate donated by ATP, constituting the first step of 2 biosynthetic pathways, one leading to arginine and/or urea and the other to pyrimidine nucleotides. The large subunit (synthetase) binds the substrates ammonia (free or transferred from glutamine from the small subunit), hydrogencarbonate and ATP and carries out an ATP-coupled ligase reaction, activating hydrogencarbonate by forming carboxy phosphate which reacts with ammonia to form carbamoyl phosphate. The polypeptide is Carbamoyl phosphate synthase large chain (Streptococcus pneumoniae (strain Hungary19A-6)).